Reading from the N-terminus, the 131-residue chain is MTAANQNYGTGRRKSSSARVFIKPGSGKITINQRELDVYFGRETSRMIVRQPLELVEMTEKLDLYITVKGGGISGQAGAIRHGITRALMEYDESLRPVLRAAGFVTRDARRVERKKVGLRKARRRPQFSKR.

This sequence belongs to the universal ribosomal protein uS9 family.

This is Small ribosomal subunit protein uS9 from Mannheimia succiniciproducens (strain KCTC 0769BP / MBEL55E).